The sequence spans 237 residues: Phosphoribosylaminoimidazole-succinocarboxamide synthase (237 aa).

The protein belongs to the SAICAR synthetase family.

The catalysed reaction is 5-amino-1-(5-phospho-D-ribosyl)imidazole-4-carboxylate + L-aspartate + ATP = (2S)-2-[5-amino-1-(5-phospho-beta-D-ribosyl)imidazole-4-carboxamido]succinate + ADP + phosphate + 2 H(+). It participates in purine metabolism; IMP biosynthesis via de novo pathway; 5-amino-1-(5-phospho-D-ribosyl)imidazole-4-carboxamide from 5-amino-1-(5-phospho-D-ribosyl)imidazole-4-carboxylate: step 1/2. The sequence is that of Phosphoribosylaminoimidazole-succinocarboxamide synthase from Shigella boydii serotype 4 (strain Sb227).